The following is an 891-amino-acid chain: Protein SEY1 homolog (891 aa).

At 1 to 754 (MNLHLVDSDG…LRAAEAGNQR (754 aa)) the chain is on the cytoplasmic side. The region spanning 52-318 (GLNYHVVGVF…RCSDYLFSYH (267 aa)) is the GB1/RHD3-type G domain. 62–69 (GGQSSGKS) contacts GTP. A helical membrane pass occupies residues 755-775 (LPAWVIPALFILGWNELLYVL). The Lumenal portion of the chain corresponds to 776–778 (TSP). Residues 779–799 (ALLVLVVVICAVFFRQFFVSQ) form a helical membrane-spanning segment. At 800 to 891 (WHAFEETGPA…MRHRTTHKLD (92 aa)) the chain is on the cytoplasmic side. The segment covering 863–880 (STHADPAPSNTTVPTAQA) has biased composition (polar residues). The segment at 863 to 891 (STHADPAPSNTTVPTAQATMRHRTTHKLD) is disordered. Basic residues predominate over residues 882 to 891 (MRHRTTHKLD).

Belongs to the TRAFAC class dynamin-like GTPase superfamily. GB1/RHD3 GTPase family. RHD3 subfamily.

The protein localises to the endoplasmic reticulum membrane. In terms of biological role, probable GTP-binding protein that may be involved in cell development. The polypeptide is Protein SEY1 homolog (Leishmania braziliensis).